The sequence spans 240 residues: GATA transcription factor 4 (240 aa).

A disordered region spans residues 104-124 (ISFTGKPRSRRSRAPAPSVAG). The Nuclear localization signal motif lies at 109-116 (KPRSRRSR). The GATA-type zinc-finger motif lies at 154-208 (ADGARRCTHCASEKTPQWRTGPLGPKTLCNACGVRYKSGRLVPEYRPASSPTFVL).

This sequence belongs to the type IV zinc-finger family. Class A subfamily. In terms of tissue distribution, expressed in roots, flowers and leaves, and to a lower extent in stems.

Its subcellular location is the nucleus. Its function is as follows. Transcriptional activator that specifically binds 5'-GATA-3' or 5'-GAT-3' motifs within gene promoters. May be involved in the regulation of some light-responsive genes. In Arabidopsis thaliana (Mouse-ear cress), this protein is GATA transcription factor 4 (GATA4).